Consider the following 253-residue polypeptide: DNA repair protein RecO (253 aa).

This sequence belongs to the RecO family.

Involved in DNA repair and RecF pathway recombination. The chain is DNA repair protein RecO from Symbiobacterium thermophilum (strain DSM 24528 / JCM 14929 / IAM 14863 / T).